Here is a 224-residue protein sequence, read N- to C-terminus: Ribonuclease 3 (224 aa).

The region spanning 5–127 (ANRLQRRLGY…IIGAIYLDSD (123 aa)) is the RNase III domain. Mg(2+) is bound at residue E40. Residue D44 is part of the active site. D113 and E116 together coordinate Mg(2+). E116 is an active-site residue. In terms of domain architecture, DRBM spans 154–224 (DPKTRLQECL…AELALKQLES (71 aa)).

This sequence belongs to the ribonuclease III family. In terms of assembly, homodimer. Requires Mg(2+) as cofactor.

The protein resides in the cytoplasm. It carries out the reaction Endonucleolytic cleavage to 5'-phosphomonoester.. Its function is as follows. Digests double-stranded RNA. Involved in the processing of primary rRNA transcript to yield the immediate precursors to the large and small rRNAs (23S and 16S). Processes some mRNAs, and tRNAs when they are encoded in the rRNA operon. Processes pre-crRNA and tracrRNA of type II CRISPR loci if present in the organism. The sequence is that of Ribonuclease 3 from Photobacterium profundum (strain SS9).